Here is a 590-residue protein sequence, read N- to C-terminus: Aspartate--tRNA(Asp/Asn) ligase (590 aa).

Glu170 is a binding site for L-aspartate. The aspartate stretch occupies residues 194–197 (QLFK). Residue Arg216 participates in L-aspartate binding. ATP contacts are provided by residues 216–218 (RDE) and Gln225. An L-aspartate-binding site is contributed by His448. ATP is bound at residue Glu482. L-aspartate is bound at residue Arg489. 534–537 (GWDR) is a binding site for ATP. Positions 559-590 (GGVDPLTEAPAPITAQQRKESGIDAKPGKDGA) are disordered. The span at 575–590 (QRKESGIDAKPGKDGA) shows a compositional bias: basic and acidic residues.

It belongs to the class-II aminoacyl-tRNA synthetase family. Type 1 subfamily. In terms of assembly, homodimer.

The protein localises to the cytoplasm. The enzyme catalyses tRNA(Asx) + L-aspartate + ATP = L-aspartyl-tRNA(Asx) + AMP + diphosphate. Functionally, aspartyl-tRNA synthetase with relaxed tRNA specificity since it is able to aspartylate not only its cognate tRNA(Asp) but also tRNA(Asn). Reaction proceeds in two steps: L-aspartate is first activated by ATP to form Asp-AMP and then transferred to the acceptor end of tRNA(Asp/Asn). The chain is Aspartate--tRNA(Asp/Asn) ligase from Mycolicibacterium gilvum (strain PYR-GCK) (Mycobacterium gilvum (strain PYR-GCK)).